We begin with the raw amino-acid sequence, 837 residues long: Anaphase-promoting complex subunit 2 (837 aa).

Phosphoserine occurs at positions 233, 329, 485, 549, and 712. The disordered stretch occupies residues 478 to 508; it reads CLETGQDSEDDSGEPEDWVPDPVDADPVKSS. Acidic residues predominate over residues 483–496; that stretch reads QDSEDDSGEPEDWV. At Y825 the chain carries Phosphotyrosine.

The protein belongs to the cullin family. The mammalian APC/C is composed at least of 14 distinct subunits ANAPC1, ANAPC2, CDC27/APC3, ANAPC4, ANAPC5, CDC16/APC6, ANAPC7, CDC23/APC8, ANAPC10, ANAPC11, CDC26/APC12, ANAPC13, ANAPC15 and ANAPC16 that assemble into a complex of at least 19 chains with a combined molecular mass of around 1.2 MDa; APC/C interacts with FZR1 and FBXO5. In the context of the APC/C complex, directly interacts with UBE2C and UBE2S. Interacts (via cullin domain) with ANAPC11 and with UBCH10. Interacts with NEUROD2. Interacts with FBXO43; the interaction is direct.

Its pathway is protein modification; protein ubiquitination. Together with the RING-H2 protein ANAPC11, constitutes the catalytic component of the anaphase promoting complex/cyclosome (APC/C), a cell cycle-regulated E3 ubiquitin ligase that controls progression through mitosis and the G1 phase of the cell cycle. The APC/C complex acts by mediating ubiquitination and subsequent degradation of target proteins: it mainly mediates the formation of 'Lys-11'-linked polyubiquitin chains and, to a lower extent, the formation of 'Lys-48'- and 'Lys-63'-linked polyubiquitin chains. The APC/C complex catalyzes assembly of branched 'Lys-11'-/'Lys-48'-linked branched ubiquitin chains on target proteins. The CDC20-APC/C complex positively regulates the formation of synaptic vesicle clustering at active zone to the presynaptic membrane in postmitotic neurons. CDC20-APC/C-induced degradation of NEUROD2 drives presynaptic differentiation. In Mus musculus (Mouse), this protein is Anaphase-promoting complex subunit 2 (Anapc2).